The following is a 647-amino-acid chain: Threonine--tRNA ligase (647 aa).

The 61-residue stretch at 1–61 (MIKITFPDGA…EEDGSIEIVT (61 aa)) folds into the TGS domain. Positions 240–538 (DHRKLGKELD…LIETYKGAFP (299 aa)) are catalytic. The Zn(2+) site is built by Cys334, His385, and His515.

The protein belongs to the class-II aminoacyl-tRNA synthetase family. In terms of assembly, homodimer. Requires Zn(2+) as cofactor.

It is found in the cytoplasm. It catalyses the reaction tRNA(Thr) + L-threonine + ATP = L-threonyl-tRNA(Thr) + AMP + diphosphate + H(+). Catalyzes the attachment of threonine to tRNA(Thr) in a two-step reaction: L-threonine is first activated by ATP to form Thr-AMP and then transferred to the acceptor end of tRNA(Thr). Also edits incorrectly charged L-seryl-tRNA(Thr). The polypeptide is Threonine--tRNA ligase (Streptococcus pyogenes serotype M49 (strain NZ131)).